The sequence spans 198 residues: Protein RD3-like (198 aa).

A coiled-coil region spans residues lysine 28 to threonine 57. A disordered region spans residues glycine 133–threonine 168. The span at serine 157 to isoleucine 166 shows a compositional bias: basic and acidic residues.

The sequence is that of Protein RD3-like (RD3L) from Homo sapiens (Human).